Reading from the N-terminus, the 122-residue chain is Large ribosomal subunit protein uL14 (122 aa).

The protein belongs to the universal ribosomal protein uL14 family. As to quaternary structure, part of the 50S ribosomal subunit. Forms a cluster with proteins L3 and L19. In the 70S ribosome, L14 and L19 interact and together make contacts with the 16S rRNA in bridges B5 and B8.

Functionally, binds to 23S rRNA. Forms part of two intersubunit bridges in the 70S ribosome. This chain is Large ribosomal subunit protein uL14, found in Mycobacterium marinum (strain ATCC BAA-535 / M).